Here is a 231-residue protein sequence, read N- to C-terminus: Orotate phosphoribosyltransferase (231 aa).

5-phospho-alpha-D-ribose 1-diphosphate contacts are provided by residues lysine 27, 79–80, arginine 106, lysine 107, lysine 110, histidine 112, and 133–141; these read YK and DDVMTAGTA. Orotate-binding residues include threonine 137 and arginine 166.

It belongs to the purine/pyrimidine phosphoribosyltransferase family. PyrE subfamily. As to quaternary structure, homodimer. Requires Mg(2+) as cofactor.

The catalysed reaction is orotidine 5'-phosphate + diphosphate = orotate + 5-phospho-alpha-D-ribose 1-diphosphate. The protein operates within pyrimidine metabolism; UMP biosynthesis via de novo pathway; UMP from orotate: step 1/2. Its function is as follows. Catalyzes the transfer of a ribosyl phosphate group from 5-phosphoribose 1-diphosphate to orotate, leading to the formation of orotidine monophosphate (OMP). The polypeptide is Orotate phosphoribosyltransferase (Bifidobacterium longum (strain DJO10A)).